The chain runs to 318 residues: Endochitinase 1 (318 aa).

The signal sequence occupies residues 1-18; sequence EFTTLFLLFSVLLLSASA. In terms of domain architecture, Chitin-binding type-1 spans 19 to 60; that stretch reads EQCGSQAGGALCASGLCCSKFGWCGDTNDYCGPGNCQSQCPG. 7 disulfide bridges follow: Cys21–Cys36, Cys30–Cys42, Cys35–Cys49, Cys54–Cys58, Cys89–Cys152, Cys164–Cys172, and Cys271–Cys303. Residue Glu134 is the Proton donor of the active site. Positions 312 to 318 are cleaved as a propeptide — removed in mature form, vacuolar targeting; the sequence is GLLVDTM.

Belongs to the glycosyl hydrolase 19 family. Chitinase class I subfamily.

Its subcellular location is the vacuole. It carries out the reaction Random endo-hydrolysis of N-acetyl-beta-D-glucosaminide (1-&gt;4)-beta-linkages in chitin and chitodextrins.. Defense against chitin-containing fungal pathogens. The polypeptide is Endochitinase 1 (CHTB1) (Solanum tuberosum (Potato)).